The primary structure comprises 165 residues: Small histone ubiquitination factor 1 (165 aa).

Over residues 1–17 (MSSRRNDYHYDGNDHQY) the composition is skewed to basic and acidic residues. Positions 1 to 86 (MSSRRNDYHY…STRASFGAAS (86 aa)) are disordered. Composition is skewed to low complexity over residues 29 to 38 (SFYESSYRSR) and 50 to 60 (SSYDSPSSSTN). A compositionally biased stretch (polar residues) spans 73–86 (PSNNSTRASFGAAS).

In terms of assembly, component of the histone H2B ubiquitin ligase complex (HULC) composed of at least brl1, brl2, rhp6 and shf1.

The protein localises to the nucleus. Its subcellular location is the cytoplasm. The protein resides in the cytoskeleton. It is found in the microtubule organizing center. It localises to the spindle pole body. Functionally, component of the histone H2B ubiquitin ligase complex (HULC) which plays a role in transcription regulation by catalyzing the monoubiquitination of histone H2B to form H2BK123ub1. H2BK123ub1 gives a specific tag for epigenetic transcriptional activation and is also a prerequisite for H3K4me and H3K79me formation. The protein is Small histone ubiquitination factor 1 (shf1) of Schizosaccharomyces pombe (strain 972 / ATCC 24843) (Fission yeast).